An 88-amino-acid polypeptide reads, in one-letter code: Small ribosomal subunit protein uS15c (88 aa).

Belongs to the universal ribosomal protein uS15 family. In terms of assembly, part of the 30S ribosomal subunit.

The protein localises to the plastid. Its subcellular location is the chloroplast. The sequence is that of Small ribosomal subunit protein uS15c (rps15) from Crucihimalaya wallichii (Rock-cress).